We begin with the raw amino-acid sequence, 80 residues long: MGSDIPVLNALNNSNRAIFVPIGPSNCGYSVLLIDILILLSGNRGSTSSKNKSLITSGLFINKNLAILYILLLSNLAIVL.

This is an uncharacterized protein from Homo sapiens (Human).